Reading from the N-terminus, the 336-residue chain is 3-isopropylmalate dehydrogenase (336 aa).

Substrate-binding residues include arginine 87, arginine 97, arginine 121, and aspartate 211. Mg(2+)-binding residues include aspartate 211, aspartate 235, and aspartate 239. 271–283 (GSAPDIAGQGIAD) contributes to the NAD(+) binding site.

The protein belongs to the isocitrate and isopropylmalate dehydrogenases family. LeuB type 2 subfamily. In terms of assembly, homodimer. It depends on Mg(2+) as a cofactor. Mn(2+) serves as cofactor.

The protein localises to the cytoplasm. It carries out the reaction (2R,3S)-3-isopropylmalate + NAD(+) = 4-methyl-2-oxopentanoate + CO2 + NADH. It participates in amino-acid biosynthesis; L-leucine biosynthesis; L-leucine from 3-methyl-2-oxobutanoate: step 3/4. Functionally, catalyzes the oxidation of 3-carboxy-2-hydroxy-4-methylpentanoate (3-isopropylmalate) to 3-carboxy-4-methyl-2-oxopentanoate. The product decarboxylates to 4-methyl-2 oxopentanoate. This is 3-isopropylmalate dehydrogenase from Mycobacterium sp. (strain JLS).